A 154-amino-acid polypeptide reads, in one-letter code: uncharacterized protein (154 aa).

Disordered stretches follow at residues 23 to 63 (ERVG…VVLK) and 79 to 154 (IKAA…DENE). A compositionally biased stretch (acidic residues) spans 43–56 (PDEDGDHSDKEDEQ). Position 50 is a phosphoserine (S50). K108 is modified (N6-acetyllysine). The residue at position 146 (S146) is a Phosphoserine.

This is an uncharacterized protein from Homo sapiens (Human).